The primary structure comprises 822 residues: SKI/DACH domain-containing protein 1 (822 aa).

Residues 245-261 (HHHHHHHHHHHHHHHRA) show a composition bias toward basic residues. Residues 245–370 (HHHHHHHHHH…SSSGSSQVSV (126 aa)) are disordered. Residues 278–318 (PHLGSFPESCSSDSESSSYSDHAANDSDFGSSLSSSSNSVS) are compositionally biased toward low complexity. A compositionally biased stretch (acidic residues) spans 319–338 (SEEEEEEGEEEEEEEEEEEG). A Glycyl lysine isopeptide (Lys-Gly) (interchain with G-Cter in SUMO2) cross-link involves residue lysine 602. 2 disordered regions span residues 658–677 (ETPS…TLGS) and 706–732 (LQTP…THEG). A compositionally biased stretch (polar residues) spans 660–675 (PSLNPLAQSQGLSCTL).

It belongs to the DACH/dachshund family.

This is SKI/DACH domain-containing protein 1 (Skida1) from Mus musculus (Mouse).